We begin with the raw amino-acid sequence, 75 residues long: Putative UPF0377 protein YAL067W-A (75 aa).

This sequence belongs to the UPF0377 family.

In Saccharomyces cerevisiae (strain ATCC 204508 / S288c) (Baker's yeast), this protein is Putative UPF0377 protein YAL067W-A.